Consider the following 1027-residue polypeptide: Presequence protease, mitochondrial (1027 aa).

A mitochondrion-targeting transit peptide spans 1 to 22 (MIRQCWAGLRLCRALYQTSYRW). His-98 is a binding site for Zn(2+). Glu-101 functions as the Proton acceptor in the catalytic mechanism. The Zn(2+) site is built by His-102 and Glu-199. Cys-113 and Cys-550 are disulfide-bonded. The interval 803–827 (RKAIRPHVVEKSSNPSPSGSEISRT) is disordered. The span at 814–825 (SSNPSPSGSEIS) shows a compositional bias: low complexity.

It belongs to the peptidase M16 family. PreP subfamily. Monomer and homodimer; homodimerization is induced by binding of the substrate. Zn(2+) serves as cofactor. Post-translationally, a disulfide bond locks the enzyme in the closed conformation preventing substrate entry into the catalytic chamber.

It is found in the mitochondrion matrix. Its activity is regulated as follows. Mainly exists in a closed and catalytically competent conformation but a closed-to-open switch allows substrate entry into the catalytic chamber. Substrate binding induces closure and dimerization. A disulfide bond may lock the enzyme in a closed conformation preventing substrate entry into the catalytic chamber, participating in redox regulation of the enzyme. Inhibited by metal-chelating agents. Inhibited by nickel and zinc excess, and slightly activated by manganese. Its function is as follows. Metalloendopeptidase of the mitochondrial matrix that functions in peptide cleavage and degradation rather than in protein processing. Has an ATP-independent activity. Specifically cleaves peptides in the range of 5 to 65 residues. Shows a preference for cleavage after small polar residues and before basic residues, but without any positional preference. Degrades the transit peptides of mitochondrial proteins after their cleavage. Also degrades other unstructured peptides. This is Presequence protease, mitochondrial (pitrm1) from Xenopus laevis (African clawed frog).